Consider the following 151-residue polypeptide: Small ribosomal subunit protein uS15 (151 aa).

Residues 1–20 (MARLHSGKRGSSGSTKPLRT) are disordered.

The protein belongs to the universal ribosomal protein uS15 family. Part of the 30S ribosomal subunit.

This is Small ribosomal subunit protein uS15 from Methanococcus vannielii (strain ATCC 35089 / DSM 1224 / JCM 13029 / OCM 148 / SB).